The sequence spans 302 residues: MTVIKTEPTTEVTLYSPPSKESLSKDDAHRKKQNNKPPSSINSRSGPNKHKLAAKAPEKKINNTDKQDLSAFLLNPSLIVKPSESKKKENIVAYNDTPGIKTEHTAFQPLTPISKKRALKEKAASEKCDSFDLSRDEKPYIQKKSKTLSSVTEINSSEYKLSLNGENTSSPAKEKSQEPIENPGSYQKTRNYLFEKPDPLDTCLQDYSSMLPSNVAEEDQEYFISVADSTLEEWTNKGQEIIDQQFQLYQEIIKKRIELSYKFKGIISVINDRADALEEQGQQLEGKIKKVKTLANEILNII.

Disordered regions lie at residues Met1–Gln67 and Ser162–Gln187. A compositionally biased stretch (polar residues) spans Asn35–Gly46. Over residues Ala56–Gln67 the composition is skewed to basic and acidic residues. Positions Ser162–Pro171 are enriched in polar residues.

In terms of assembly, interacts with CDC6.

Its subcellular location is the nucleus. May be involved in cell wall organization and biogenesis. The chain is Protein ECM11 (ECM11) from Saccharomyces cerevisiae (strain ATCC 204508 / S288c) (Baker's yeast).